The primary structure comprises 408 residues: Formate-dependent phosphoribosylglycinamide formyltransferase (408 aa).

Residues 25–26 (EL) and E85 each bind N(1)-(5-phospho-beta-D-ribosyl)glycinamide. ATP contacts are provided by residues R118, K159, 164–169 (SSGKGQ), 199–202 (EAFV), and E207. Residues 123-318 (KLAAEELGLP…EFELHAKAIL (196 aa)) form the ATP-grasp domain. Mg(2+) contacts are provided by E277 and E289. Residues D296, K365, and 372-373 (RR) each bind N(1)-(5-phospho-beta-D-ribosyl)glycinamide.

Belongs to the PurK/PurT family. In terms of assembly, homodimer.

The enzyme catalyses N(1)-(5-phospho-beta-D-ribosyl)glycinamide + formate + ATP = N(2)-formyl-N(1)-(5-phospho-beta-D-ribosyl)glycinamide + ADP + phosphate + H(+). Its pathway is purine metabolism; IMP biosynthesis via de novo pathway; N(2)-formyl-N(1)-(5-phospho-D-ribosyl)glycinamide from N(1)-(5-phospho-D-ribosyl)glycinamide (formate route): step 1/1. Functionally, involved in the de novo purine biosynthesis. Catalyzes the transfer of formate to 5-phospho-ribosyl-glycinamide (GAR), producing 5-phospho-ribosyl-N-formylglycinamide (FGAR). Formate is provided by PurU via hydrolysis of 10-formyl-tetrahydrofolate. The polypeptide is Formate-dependent phosphoribosylglycinamide formyltransferase (Corynebacterium glutamicum (strain R)).